We begin with the raw amino-acid sequence, 231 residues long: Aminodeoxyfutalosine nucleosidase (231 aa).

Residue glutamate 14 is the Proton acceptor of the active site. Residues glycine 81, valine 155, and 175-176 (ME) contribute to the substrate site. Aspartate 199 acts as the Proton donor in catalysis.

This sequence belongs to the PNP/UDP phosphorylase family. As to quaternary structure, homodimer.

The enzyme catalyses 6-amino-6-deoxyfutalosine + H2O = dehypoxanthine futalosine + adenine. It catalyses the reaction S-adenosyl-L-homocysteine + H2O = S-(5-deoxy-D-ribos-5-yl)-L-homocysteine + adenine. It carries out the reaction S-methyl-5'-thioadenosine + H2O = 5-(methylsulfanyl)-D-ribose + adenine. The catalysed reaction is 5'-deoxyadenosine + H2O = 5-deoxy-D-ribose + adenine. The protein operates within quinol/quinone metabolism; menaquinone biosynthesis. It functions in the pathway amino-acid biosynthesis; L-methionine biosynthesis via salvage pathway; S-methyl-5-thio-alpha-D-ribose 1-phosphate from S-methyl-5'-thioadenosine (hydrolase route): step 1/2. Functionally, catalyzes the direct conversion of aminodeoxyfutalosine (AFL) into dehypoxanthine futalosine (DHFL) and adenine via the hydrolysis of the N-glycosidic bond; this reaction seems to represent an essential step in the menaquinone biosynthesis pathway in Helicobacter species. Can also probably catalyzes the hydrolysis of 5'-methylthioadenosine (MTA) and S-adenosylhomocysteine (SAH) to adenine and the corresponding thioribose, 5'-methylthioribose and S-ribosylhomocysteine, respectively. These other activities highlight the tremendous versatility of the enzyme, which also plays key roles in S-adenosylmethionine recycling and in the biosynthesis of the quorum-sensing molecule autoinducer-2. Does not act on futalosine (FL) as substrate. This chain is Aminodeoxyfutalosine nucleosidase (mtnN), found in Helicobacter pylori (strain ATCC 700392 / 26695) (Campylobacter pylori).